The sequence spans 248 residues: Small ribosomal subunit protein eS1 (248 aa).

The tract at residues 1–21 is disordered; the sequence is MAVGKDKRISKGKKGGKKKIV.

Belongs to the eukaryotic ribosomal protein eS1 family. Component of the small ribosomal subunit. Mature ribosomes consist of a small (40S) and a large (60S) subunit. The 40S subunit contains about 33 different proteins and 1 molecule of RNA (18S). The 60S subunit contains about 49 different proteins and 3 molecules of RNA (25S, 5.8S and 5S).

It is found in the cytoplasm. This Syntrichia ruralis (Great hairy screw-moss) protein is Small ribosomal subunit protein eS1.